The primary structure comprises 463 residues: Probable mannan endo-1,4-beta-mannosidase F (463 aa).

The first 18 residues, 1–18 (MRSLSSIALLSVVGAASA), serve as a signal peptide directing secretion. In terms of domain architecture, CBM1 spans 19-54 (QAGPWAQCGGKSFSGSSECASGWKCQELNEWFSQCV). Residues 57-78 (AESTTPTVSSTPTPTDAPSVSI) form a disordered region. The segment covering 59-77 (STTPTVSSTPTPTDAPSVS) has biased composition (low complexity). Residues 75–118 (SVSITASATTGINKSISVSSASKSTPLPSSSSASPSPRPTGSGS) form a ser-rich linker region. Asn-87 carries an N-linked (GlcNAc...) asparagine glycan. The span at 93–118 (SSASKSTPLPSSSSASPSPRPTGSGS) shows a compositional bias: low complexity. Residues 93–121 (SSASKSTPLPSSSSASPSPRPTGSGSFAK) are disordered. Residues 119-463 (FAKADGLQFS…MDHMENVNKN (345 aa)) are catalytic. 2 residues coordinate substrate: Trp-171 and Asn-285. Glu-286 serves as the catalytic Proton donor. A substrate-binding site is contributed by Tyr-361. The active-site Nucleophile is the Glu-395. Residue Trp-424 participates in substrate binding.

Belongs to the glycosyl hydrolase 5 (cellulase A) family.

The protein localises to the secreted. It catalyses the reaction Random hydrolysis of (1-&gt;4)-beta-D-mannosidic linkages in mannans, galactomannans and glucomannans.. Functionally, endo-1,4-mannanase, a crucial enzyme for depolymerization of seed galactomannans and wood galactoglucomannans. This is Probable mannan endo-1,4-beta-mannosidase F (manF) from Aspergillus flavus (strain ATCC 200026 / FGSC A1120 / IAM 13836 / NRRL 3357 / JCM 12722 / SRRC 167).